The primary structure comprises 431 residues: Glucose-1-phosphate adenylyltransferase (431 aa).

Beta-D-fructose 1,6-bisphosphate is bound at residue K39. AMP is bound by residues R40, H46, and R52. Y114 lines the alpha-D-glucose 1-phosphate pocket. R130 is an AMP binding site. Alpha-D-glucose 1-phosphate contacts are provided by residues G179, 194–195 (EK), and S212. R386 serves as a coordination point for AMP. Beta-D-fructose 1,6-bisphosphate is bound at residue 429–431 (QER).

Belongs to the bacterial/plant glucose-1-phosphate adenylyltransferase family. In terms of assembly, homotetramer.

The enzyme catalyses alpha-D-glucose 1-phosphate + ATP + H(+) = ADP-alpha-D-glucose + diphosphate. The protein operates within glycan biosynthesis; glycogen biosynthesis. With respect to regulation, allosterically activated by fructose-1,6-bisphosphate (F16BP) and inhibited by AMP. Its function is as follows. Involved in the biosynthesis of ADP-glucose, a building block required for the elongation reactions to produce glycogen. Catalyzes the reaction between ATP and alpha-D-glucose 1-phosphate (G1P) to produce pyrophosphate and ADP-Glc. The sequence is that of Glucose-1-phosphate adenylyltransferase from Klebsiella pneumoniae subsp. pneumoniae (strain ATCC 700721 / MGH 78578).